A 115-amino-acid chain; its full sequence is Ribonuclease P protein component (115 aa).

The protein belongs to the RnpA family. As to quaternary structure, consists of a catalytic RNA component (M1 or rnpB) and a protein subunit.

It catalyses the reaction Endonucleolytic cleavage of RNA, removing 5'-extranucleotides from tRNA precursor.. RNaseP catalyzes the removal of the 5'-leader sequence from pre-tRNA to produce the mature 5'-terminus. It can also cleave other RNA substrates such as 4.5S RNA. The protein component plays an auxiliary but essential role in vivo by binding to the 5'-leader sequence and broadening the substrate specificity of the ribozyme. The protein is Ribonuclease P protein component of Staphylococcus epidermidis (strain ATCC 35984 / DSM 28319 / BCRC 17069 / CCUG 31568 / BM 3577 / RP62A).